Reading from the N-terminus, the 145-residue chain is NADH-quinone oxidoreductase subunit A (145 aa).

The next 3 membrane-spanning stretches (helical) occupy residues 14-34 (FAVF…GAWF), 66-86 (FYLV…LYAW), and 96-116 (VGFV…FYLV).

It belongs to the complex I subunit 3 family. NDH-1 is composed of 13 different subunits. Subunits NuoA, H, J, K, L, M, N constitute the membrane sector of the complex.

It localises to the cell inner membrane. It carries out the reaction a quinone + NADH + 5 H(+)(in) = a quinol + NAD(+) + 4 H(+)(out). Its function is as follows. NDH-1 shuttles electrons from NADH, via FMN and iron-sulfur (Fe-S) centers, to quinones in the respiratory chain. The immediate electron acceptor for the enzyme in this species is believed to be ubiquinone. Couples the redox reaction to proton translocation (for every two electrons transferred, four hydrogen ions are translocated across the cytoplasmic membrane), and thus conserves the redox energy in a proton gradient. This chain is NADH-quinone oxidoreductase subunit A, found in Erwinia tasmaniensis (strain DSM 17950 / CFBP 7177 / CIP 109463 / NCPPB 4357 / Et1/99).